The following is a 1089-amino-acid chain: Translocase of chloroplast 120, chloroplastic (1089 aa).

The residue at position 2 (Gly2) is an N-acetylglycine. 3 disordered regions span residues 158–179 (ATED…GVVS), 255–339 (TLSP…GLGR), and 353–381 (QPRV…EHDE). A compositionally biased stretch (polar residues) spans 165–176 (ENGNTHSSSENG). 3 positions are modified to phosphoserine: Ser179, Ser263, and Ser283. A compositionally biased stretch (basic and acidic residues) spans 300 to 312 (EIKESQHMERESE). Over residues 327-339 (AALPPARPAGLGR) the composition is skewed to low complexity. Over residues 353–374 (QPRVNGNVSHNQPQQAEDSTTA) the composition is skewed to polar residues. Positions 454 to 683 (DFSCTIMVLG…KLQDNIPGGQ (230 aa)) constitute an AIG1-type G domain. Positions 463-470 (GKSGVGKS) are G1. Residues 466–471 (GVGKSA) and 485–490 (DAFQVG) each bind GTP. Residue Ser470 participates in Mg(2+) binding. The segment at 485–488 (DAFQ) is homodimerization. The tract at residues 489-493 (VGTKK) is G2. Residues 510–513 (DTPG) are G3. The tract at residues 548-553 (RLDMQS) is homodimerization. Residues 582-585 (THAA) form a G4 region. GTP-binding positions include His583 and 631-632 (EN). The interval 631–633 (ENH) is G5. The tract at residues 710–748 (PEQQYDDEDDEDDLDESSDSEEESEYDELPPFKRLTKAE) is disordered. The segment covering 713 to 737 (QYDDEDDEDDLDESSDSEEESEYDE) has biased composition (acidic residues). Residues 767–788 (REKLFMKRQMKEERKRRKLLKK) are a coiled coil. Residues 1064–1080 (LAVVALVPLFKKLLTYY) traverse the membrane as a helical segment.

Belongs to the TRAFAC class TrmE-Era-EngA-EngB-Septin-like GTPase superfamily. AIG1/Toc34/Toc159-like paraseptin GTPase family. TOC159 subfamily. As to quaternary structure, homodimer. Part of the TOC core complex that includes 1 protein for the specific recognition of transit peptides surrounded by a ring composed of four proteins forming translocation channels, and four to five GTP-binding proteins providing energy. This core complex can interact with components of the TIC complex to form a larger import complex. Chloroplastic protein precursor such as prSS (precursor of the RuBisCO small subunit) interacts with these complexes. The TOC complex contains a specific subset of polar lipids such as digalactosyldiacylglyceride (DGDG), phosphatidylcholine (PC) and phosphatidylglycerol (PG). It depends on Mg(2+) as a cofactor. In terms of processing, phosphorylated by KOC1. In terms of tissue distribution, expressed in seedlings, flowers, and roots.

The protein localises to the plastid. It localises to the chloroplast outer membrane. The protein resides in the cytoplasm. Its function is as follows. GTPase involved in protein precursor import into chloroplasts. Seems to recognize chloroplast-destined precursor proteins and regulate their presentation to the translocation channel through GTP hydrolysis. Probably specialized in the import of nuclear encoded non-photosynthetic preproteins from the cytoplasm to the chloroplast. This chain is Translocase of chloroplast 120, chloroplastic, found in Arabidopsis thaliana (Mouse-ear cress).